The following is a 96-amino-acid chain: MNIRPLHDRVIVERQEVESKSAGGIVLTGSAAEKSTRGTILAVGKGRILENGSLQPLDVKVGDTVIFAEDRGTRAEKIEGKEVLIMSEFNIMAIVE.

The protein belongs to the GroES chaperonin family. In terms of assembly, heptamer of 7 subunits arranged in a ring. Interacts with the chaperonin GroEL.

The protein localises to the cytoplasm. In terms of biological role, together with the chaperonin GroEL, plays an essential role in assisting protein folding. The GroEL-GroES system forms a nano-cage that allows encapsulation of the non-native substrate proteins and provides a physical environment optimized to promote and accelerate protein folding. GroES binds to the apical surface of the GroEL ring, thereby capping the opening of the GroEL channel. The protein is Co-chaperonin GroES of Vibrio atlanticus (strain LGP32) (Vibrio splendidus (strain Mel32)).